Reading from the N-terminus, the 46-residue chain is Large ribosomal subunit protein bL34 (46 aa).

The protein belongs to the bacterial ribosomal protein bL34 family.

The protein is Large ribosomal subunit protein bL34 of Trichodesmium erythraeum (strain IMS101).